Consider the following 128-residue polypeptide: Large ribosomal subunit protein bL19 (128 aa).

The protein belongs to the bacterial ribosomal protein bL19 family.

Its function is as follows. This protein is located at the 30S-50S ribosomal subunit interface and may play a role in the structure and function of the aminoacyl-tRNA binding site. The protein is Large ribosomal subunit protein bL19 of Ralstonia nicotianae (strain ATCC BAA-1114 / GMI1000) (Ralstonia solanacearum).